The chain runs to 145 residues: Superoxide dismutase [Mn/Fe] (145 aa).

2 residues coordinate Fe(3+): His10 and His64. Positions 10 and 64 each coordinate Mn(2+).

The protein belongs to the iron/manganese superoxide dismutase family. Mn(2+) is required as a cofactor. It depends on Fe(3+) as a cofactor.

The catalysed reaction is 2 superoxide + 2 H(+) = H2O2 + O2. Functionally, destroys superoxide anion radicals which are normally produced within the cells and which are toxic to biological systems. Catalyzes the dismutation of superoxide anion radicals into O2 and H2O2 by successive reduction and oxidation of the transition metal ion at the active site. The sequence is that of Superoxide dismutase [Mn/Fe] (sodA) from Streptococcus canis.